Here is a 245-residue protein sequence, read N- to C-terminus: Probable phosphatase YcdX (245 aa).

Residues His-7, His-9, His-15, His-40, Glu-73, His-101, His-131, Asp-192, and His-194 each coordinate Zn(2+).

It belongs to the PHP family. As to quaternary structure, homotrimer. Zn(2+) is required as a cofactor.

The chain is Probable phosphatase YcdX from Salmonella arizonae (strain ATCC BAA-731 / CDC346-86 / RSK2980).